An 88-amino-acid polypeptide reads, in one-letter code: Phage-like element PBSX protein XkdR (88 aa).

The protein to B.subtilis YqbR.

The chain is Phage-like element PBSX protein XkdR (xkdR) from Bacillus subtilis (strain 168).